Here is a 96-residue protein sequence, read N- to C-terminus: Small ribosomal subunit protein bS20 (96 aa).

This sequence belongs to the bacterial ribosomal protein bS20 family.

In terms of biological role, binds directly to 16S ribosomal RNA. This Anaplasma phagocytophilum (strain HZ) protein is Small ribosomal subunit protein bS20.